The following is a 326-amino-acid chain: Transcription initiation factor IIB (326 aa).

The TFIIB-type zinc finger occupies 26-57 (DVEVCPECGSPRLIRDYRRGEFICQDCGLVIE). Residues Cys30, Cys33, Cys49, and Cys52 each coordinate Zn(2+). 2 consecutive repeat copies span residues 143–226 (SELD…TREL) and 237–318 (DYIP…ELAE).

Belongs to the TFIIB family.

Its function is as follows. Stabilizes TBP binding to an archaeal box-A promoter. Also responsible for recruiting RNA polymerase II to the pre-initiation complex (DNA-TBP-TFIIB). The polypeptide is Transcription initiation factor IIB (Archaeoglobus fulgidus (strain ATCC 49558 / DSM 4304 / JCM 9628 / NBRC 100126 / VC-16)).